The chain runs to 106 residues: Thioredoxin-like protein YusE (106 aa).

A Thioredoxin domain is found at 1 to 101; the sequence is MKELQEHELD…LYELIKQKSS (101 aa). Cys-26 and Cys-29 are joined by a disulfide.

This chain is Thioredoxin-like protein YusE (yusE), found in Bacillus subtilis (strain 168).